Consider the following 1108-residue polypeptide: cGMP-inhibited 3',5'-cyclic phosphodiesterase 3B (1108 aa).

Residues M1 to P11 show a composition bias toward basic and acidic residues. Positions M1–E32 are disordered. Residues M1–E32 are interaction with RAPGEF3. Residues R14–A23 are compositionally biased toward pro residues. S15 is subject to Phosphoserine. 6 helical membrane passes run A73–A93, L114–T134, A144–W164, A175–A195, V204–L224, and L231–F251. S279 carries the phosphoserine; by PKB/AKT1 or PKB/AKT2 modification. S280 and S427 each carry phosphoserine. A disordered region spans residues D405–R448. Positions S414–L433 are enriched in polar residues. The segment at A421–G445 is interaction with PIK3R6. Residues S435–G445 are compositionally biased toward basic and acidic residues. Residues P633–E1070 enclose the PDEase domain. The Proton donor role is filled by H719. H719 lines the AMP pocket. 4 residues coordinate Mg(2+): H723, H803, D804, and D919. AMP is bound by residues D804, D919, and Q970. Over residues E999–D1033 the composition is skewed to acidic residues. The segment at E999–R1042 is disordered.

It belongs to the cyclic nucleotide phosphodiesterase family. PDE3 subfamily. Homodimer. Interacts with PIK3CG; regulates PDE3B activity and thereby cAMP levels in cells. Interacts with RAPGEF3 and PIK3R6; form a signaling complex that regulates phosphatidylinositol 3-kinase gamma in angiogenesis. Interacts with ABHD15; this interaction regulates PDE3B's stability and expression and, thereby, impacts the antilipolytic action of insulin. Mg(2+) is required as a cofactor. Mn(2+) serves as cofactor. Post-translationally, phosphorylation at Ser-279 mediates insulin-induced activation of PDE3B. As to expression, abundant in adipose tissues.

Its subcellular location is the membrane. The catalysed reaction is a nucleoside 3',5'-cyclic phosphate + H2O = a nucleoside 5'-phosphate + H(+). It catalyses the reaction 3',5'-cyclic AMP + H2O = AMP + H(+). The enzyme catalyses 3',5'-cyclic GMP + H2O = GMP + H(+). Its activity is regulated as follows. Inhibited by cGMP. Functionally, cyclic nucleotide phosphodiesterase with a dual-specificity for the second messengers cAMP and cGMP, which are key regulators of many important physiological processes. Regulates angiogenesis by inhibiting the cAMP-dependent guanine nucleotide exchange factor RAPGEF3 and downstream phosphatidylinositol 3-kinase gamma-mediated signaling. Controls cardiac contractility by reducing cAMP concentration in cardiocytes. The polypeptide is cGMP-inhibited 3',5'-cyclic phosphodiesterase 3B (Rattus norvegicus (Rat)).